A 330-amino-acid chain; its full sequence is Putative [LysW]-L-2-aminoadipate/[LysW]-L-glutamate phosphate reductase (330 aa).

NADP(+) is bound by residues 10-13 (SGYI) and 34-36 (SRK). The active site involves Cys142. Residue Asn297 coordinates NADP(+).

Belongs to the NAGSA dehydrogenase family. Type 1 subfamily. LysY sub-subfamily.

The protein resides in the cytoplasm. The catalysed reaction is [amino-group carrier protein]-C-terminal-N-(1-carboxy-5-oxopentan-1-yl)-L-glutamine + phosphate + NADP(+) = [amino-group carrier protein]-C-terminal-N-(1-carboxy-5-phosphooxy-5-oxopentan-1-yl)-L-glutamine + NADPH + H(+). It catalyses the reaction [amino-group carrier protein]-C-terminal-gamma-(L-glutamyl-5-semialdehyde)-L-glutamate + phosphate + NADP(+) = [amino-group carrier protein]-C-terminal-gamma-(5-phospho-L-glutamyl)-L-glutamate + NADPH + H(+). The protein operates within amino-acid biosynthesis; L-lysine biosynthesis via AAA pathway; L-lysine from L-alpha-aminoadipate (Thermus route): step 3/5. It functions in the pathway amino-acid biosynthesis; L-arginine biosynthesis. In terms of biological role, involved in both the arginine and lysine biosynthetic pathways. The chain is Putative [LysW]-L-2-aminoadipate/[LysW]-L-glutamate phosphate reductase from Pyrococcus abyssi (strain GE5 / Orsay).